Reading from the N-terminus, the 1156-residue chain is Cartilage intermediate layer protein 2 (1156 aa).

The first 20 residues, 1-20, serve as a signal peptide directing secretion; that stretch reads MASLLPLLCLCVVAAHLAGA. Positions 146-197 constitute a TSP type-1 domain; it reads EASWGAWGPWGPCSGSCGPGRRLRRRHCPSPAGDACPGRPLEAQKCVRPRCP. Cystine bridges form between cysteine 158–cysteine 191, cysteine 162–cysteine 196, and cysteine 173–cysteine 181. Asparagine 276, asparagine 308, and asparagine 329 each carry an N-linked (GlcNAc...) asparagine glycan. An Ig-like C2-type domain is found at 292-376; that stretch reads PYLVKHPESR…AVRSGTARLT (85 aa). The cysteines at positions 313 and 359 are disulfide-linked. The interval 1134–1156 is disordered; the sequence is SEAAQAQARASGPLRTRRGRVRQ.

May be cleaved into 2 chains possibly by a furin-like protease upon or preceding secretion. In terms of tissue distribution, expressed in articular chondrocytes but not in knee meniscal cartilage cells. Localizes to the intermediate to deep zone of articular cartilage.

It localises to the secreted. It is found in the extracellular space. The protein localises to the extracellular matrix. In terms of biological role, may play a role in cartilage scaffolding. The chain is Cartilage intermediate layer protein 2 (CILP2) from Homo sapiens (Human).